The following is a 51-amino-acid chain: Non-specific lipid-transfer protein (51 aa).

The protein belongs to the plant LTP family.

Plant non-specific lipid-transfer proteins transfer phospholipids as well as galactolipids across membranes. May play a role in wax or cutin deposition in the cell walls of expanding epidermal cells and certain secretory tissues. This Lycium barbarum (Barbary matrimony-vine) protein is Non-specific lipid-transfer protein.